Reading from the N-terminus, the 423-residue chain is Zinc-type alcohol dehydrogenase-like protein C1198.01 (423 aa).

The interval 14–36 is disordered; the sequence is KQLGHREVSEGSTQPKPDPSGAT. Residues Cys-74, His-97, Cys-127, Cys-130, Cys-133, and Cys-141 each coordinate Zn(2+).

The protein belongs to the zinc-containing alcohol dehydrogenase family. Class-III subfamily. The cofactor is Zn(2+).

The protein localises to the golgi apparatus. The polypeptide is Zinc-type alcohol dehydrogenase-like protein C1198.01 (Schizosaccharomyces pombe (strain 972 / ATCC 24843) (Fission yeast)).